The chain runs to 164 residues: CB1 cannabinoid receptor-interacting protein 1 (164 aa).

Belongs to the CNRIP family. As to quaternary structure, interacts with the cannabinoid receptor CNR1 (via C-terminus). Does not interact with cannabinoid receptor CNR2. Highly expressed in brain. Also detected in heart, lung, intestine, kidney, testis, spleen, liver and muscle (at protein level).

Suppresses cannabinoid receptor CNR1-mediated tonic inhibition of voltage-gated calcium channels. The protein is CB1 cannabinoid receptor-interacting protein 1 (Cnrip1) of Mus musculus (Mouse).